The chain runs to 460 residues: Glycine--tRNA ligase (460 aa).

2 residues coordinate substrate: Arg99 and Glu162. ATP is bound by residues 194-196 (RNE), 204-209 (FRTREF), 281-282 (EL), and 325-328 (GVGR). 209-213 (FEQME) lines the substrate pocket. 321 to 325 (EPAAG) is a substrate binding site.

Belongs to the class-II aminoacyl-tRNA synthetase family. Homodimer.

The protein localises to the cytoplasm. It catalyses the reaction tRNA(Gly) + glycine + ATP = glycyl-tRNA(Gly) + AMP + diphosphate. Its function is as follows. Catalyzes the attachment of glycine to tRNA(Gly). The protein is Glycine--tRNA ligase of Streptomyces coelicolor (strain ATCC BAA-471 / A3(2) / M145).